Reading from the N-terminus, the 433-residue chain is Histidinol dehydrogenase (433 aa).

The NAD(+) site is built by Tyr133, Gln194, and Asn217. 3 residues coordinate substrate: Ser240, Gln262, and His265. Residues Gln262 and His265 each coordinate Zn(2+). Residues Glu330 and His331 each act as proton acceptor in the active site. Substrate-binding residues include His331, Asp364, Glu418, and His423. Asp364 is a Zn(2+) binding site. Position 423 (His423) interacts with Zn(2+).

The protein belongs to the histidinol dehydrogenase family. The cofactor is Zn(2+).

It carries out the reaction L-histidinol + 2 NAD(+) + H2O = L-histidine + 2 NADH + 3 H(+). The protein operates within amino-acid biosynthesis; L-histidine biosynthesis; L-histidine from 5-phospho-alpha-D-ribose 1-diphosphate: step 9/9. Functionally, catalyzes the sequential NAD-dependent oxidations of L-histidinol to L-histidinaldehyde and then to L-histidine. The protein is Histidinol dehydrogenase of Hydrogenovibrio crunogenus (strain DSM 25203 / XCL-2) (Thiomicrospira crunogena).